A 96-amino-acid chain; its full sequence is Large ribosomal subunit protein uL23 (96 aa).

The protein belongs to the universal ribosomal protein uL23 family. In terms of assembly, part of the 50S ribosomal subunit. Contacts protein L29, and trigger factor when it is bound to the ribosome.

Functionally, one of the early assembly proteins it binds 23S rRNA. One of the proteins that surrounds the polypeptide exit tunnel on the outside of the ribosome. Forms the main docking site for trigger factor binding to the ribosome. This is Large ribosomal subunit protein uL23 from Caldicellulosiruptor saccharolyticus (strain ATCC 43494 / DSM 8903 / Tp8T 6331).